A 141-amino-acid chain; its full sequence is Nucleoside diphosphate kinase (141 aa).

ATP-binding residues include K9, F57, R85, T91, R102, and N112. H115 functions as the Pros-phosphohistidine intermediate in the catalytic mechanism.

The protein belongs to the NDK family. In terms of assembly, homotetramer. It depends on Mg(2+) as a cofactor.

Its subcellular location is the cytoplasm. It catalyses the reaction a 2'-deoxyribonucleoside 5'-diphosphate + ATP = a 2'-deoxyribonucleoside 5'-triphosphate + ADP. The enzyme catalyses a ribonucleoside 5'-diphosphate + ATP = a ribonucleoside 5'-triphosphate + ADP. Its function is as follows. Major role in the synthesis of nucleoside triphosphates other than ATP. The ATP gamma phosphate is transferred to the NDP beta phosphate via a ping-pong mechanism, using a phosphorylated active-site intermediate. In Chlamydia felis (strain Fe/C-56) (Chlamydophila felis), this protein is Nucleoside diphosphate kinase.